Reading from the N-terminus, the 443-residue chain is Major royal jelly protein 7 (443 aa).

Residues 1–17 (MTRWLFMVACLGIACQG) form the signal peptide. Residues Asn145, Asn161, Asn178, and Asn321 are each glycosylated (N-linked (GlcNAc...) asparagine).

Belongs to the major royal jelly protein family. In terms of tissue distribution, found in and secreted from the hypopharyngeal glands of the worker honey bee (at protein level); expression peaks at 12 days post eclosion. Expressed in the brains of adult worker bees peaking at 12 days post eclosion (at protein level). Expressed in the spermatheca of adult queen bees (at protein level); Expression levels are higher in mated queens than in virgin queens.

The protein resides in the secreted. Component of royal jelly, a substance produced in the hypopharyngeal gland containing proteins, free amino acids, fatty acids, sugars and other nutrients, which is fed to developing larvae by worker nurse bees. All larvae are fed some royal jelly (also known as worker jelly) early in their development but it forms the principal source of nutrition for larvae destined to become queen bees. Produced in the spermatheca of adult queen bees, along with other major royal jelly proteins, where it may act as a nutrient supply for sperm stored by mated queens, or be involved in energy metabolism. This Apis mellifera (Honeybee) protein is Major royal jelly protein 7.